A 262-amino-acid polypeptide reads, in one-letter code: Thiazole synthase (262 aa).

The active-site Schiff-base intermediate with DXP is the K96. Residues G157, 184–185, and 206–207 contribute to the 1-deoxy-D-xylulose 5-phosphate site; these read AG and NT.

Belongs to the ThiG family. As to quaternary structure, homotetramer. Forms heterodimers with either ThiH or ThiS.

It is found in the cytoplasm. The catalysed reaction is [ThiS sulfur-carrier protein]-C-terminal-Gly-aminoethanethioate + 2-iminoacetate + 1-deoxy-D-xylulose 5-phosphate = [ThiS sulfur-carrier protein]-C-terminal Gly-Gly + 2-[(2R,5Z)-2-carboxy-4-methylthiazol-5(2H)-ylidene]ethyl phosphate + 2 H2O + H(+). It functions in the pathway cofactor biosynthesis; thiamine diphosphate biosynthesis. In terms of biological role, catalyzes the rearrangement of 1-deoxy-D-xylulose 5-phosphate (DXP) to produce the thiazole phosphate moiety of thiamine. Sulfur is provided by the thiocarboxylate moiety of the carrier protein ThiS. In vitro, sulfur can be provided by H(2)S. The polypeptide is Thiazole synthase (Legionella pneumophila (strain Paris)).